A 789-amino-acid polypeptide reads, in one-letter code: MSLKRNIRRLDSIVPTAGREGSDIQFNLYKGRGVAVFTSGGDSQGMNGAVHSVVRMGIYLGCKVCFINEGYQGMVDGGDNIVEASWNSGSDIIQKGGTIIGSARCTDLRQREGRMKAAYNLIEKGITNLVVIGGDGSLIGANQFRKDWPGLVKELVDTKKITPEAAKSYPNIQIVGLVGSIDNDFCGTDMTIGTDSALQRIIESIDAVVATAQSHQRAFVVEVMGRHCGYLALVAALACEADFCFIPEWPPPVNWREILCKKLQEMRAEGQRLNIIVVAEDDDRDGTPISSDLVKDVVAKTLKYDTRVTVLGHVQRGGSPSAFDRLLGCRMGAEAVLALMEMNEESEPCVISIMVTRWYVPLMQCVERTKAVQKAMSEKDWELAVKLRGRSFQRNLETYKLLTKLRTVEKDNLSGGQNFNVAVMNVGAPAGGMNAAVRSFVRMAIVPSLYSLRYEDSFEGLANGAFKKFQWGDVTNWVMHGGSFLGTQKQLPNEKNVPLIAEQLRKHNIQALLLVGGFEAYHSTLILSKNREKYPEFCIPLCVIPCTISNNVPGTSISLGSDTAINEICTMIDKIKQSATGTKRRVFIIETMGGYCGYLATLSALASGADNAYIFEEKFTVEISLRRGSHRCKMAQGVQRYLIVRNEYANKNFTTEFVKQLFAEEGKGEFSTRINILGHAQQGGSPTPFDRNMGTKLAARALEYIITQIKESMVNGVVSTKSPERATLLGLTGRRVVFTPVEELAAETDFDKRLPCDQWWLKLRPLLRILAKHTSIYHTEAMEDTEDYD.

The interval 1 to 404 is N-terminal catalytic PFK domain 1; the sequence is MSLKRNIRRL…NLETYKLLTK (404 aa). Residues G41, 104–105, and 134–137 contribute to the ATP site; these read RC and GDGS. D135 contacts Mg(2+). Substrate contacts are provided by residues 180 to 182, R217, 224 to 226, E280, R307, and 313 to 316; these read SID, MGR, and HVQR. The Proton acceptor role is filled by D182. Residues 405–419 are interdomain linker; the sequence is LRTVEKDNLSGGQNF. A C-terminal regulatory PFK domain 2 region spans residues 420 to 789; sequence NVAVMNVGAP…EAMEDTEDYD (370 aa). Beta-D-fructose 2,6-bisphosphate-binding positions include K489, 547-551, R585, 592-594, E647, R673, 679-682, and R753; these read TISNN, MGG, and HAQQ.

The protein belongs to the phosphofructokinase type A (PFKA) family. ATP-dependent PFK group I subfamily. Eukaryotic two domain clade 'E' sub-subfamily. As to quaternary structure, homotetramer. It depends on Mg(2+) as a cofactor.

It localises to the cytoplasm. It catalyses the reaction beta-D-fructose 6-phosphate + ATP = beta-D-fructose 1,6-bisphosphate + ADP + H(+). Its pathway is carbohydrate degradation; glycolysis; D-glyceraldehyde 3-phosphate and glycerone phosphate from D-glucose: step 3/4. Allosterically activated by ADP, AMP, or fructose 2,6-bisphosphate, and allosterically inhibited by ATP or citrate. Its function is as follows. Catalyzes the phosphorylation of D-fructose 6-phosphate to fructose 1,6-bisphosphate by ATP, the first committing step of glycolysis. In Haemonchus contortus (Barber pole worm), this protein is ATP-dependent 6-phosphofructokinase (PFK).